The sequence spans 177 residues: Large ribosomal subunit protein uL6 (177 aa).

The protein belongs to the universal ribosomal protein uL6 family. As to quaternary structure, part of the 50S ribosomal subunit.

This protein binds to the 23S rRNA, and is important in its secondary structure. It is located near the subunit interface in the base of the L7/L12 stalk, and near the tRNA binding site of the peptidyltransferase center. This chain is Large ribosomal subunit protein uL6, found in Allorhizobium ampelinum (strain ATCC BAA-846 / DSM 112012 / S4) (Agrobacterium vitis (strain S4)).